The primary structure comprises 321 residues: Acetylglutamate kinase (321 aa).

Residues 88–89, Arg110, and Asn216 contribute to the substrate site; that span reads GG.

This sequence belongs to the acetylglutamate kinase family. ArgB subfamily.

The protein localises to the cytoplasm. It catalyses the reaction N-acetyl-L-glutamate + ATP = N-acetyl-L-glutamyl 5-phosphate + ADP. Its pathway is amino-acid biosynthesis; L-arginine biosynthesis; N(2)-acetyl-L-ornithine from L-glutamate: step 2/4. Catalyzes the ATP-dependent phosphorylation of N-acetyl-L-glutamate. This is Acetylglutamate kinase from Ehrlichia chaffeensis (strain ATCC CRL-10679 / Arkansas).